The chain runs to 477 residues: Dihydrolipoyl dehydrogenase 3 (477 aa).

FAD-binding positions include 39–47, Lys56, and Ala118; that span reads EKGEYGGAC. Cys47 and Cys52 form a disulfide bridge. Residues 186–190, Glu209, and 279–282 each bind NAD(+); these read GAGYI and AVGR. Residues Asp322 and Ala330 each coordinate FAD. The active-site Proton acceptor is His454.

This sequence belongs to the class-I pyridine nucleotide-disulfide oxidoreductase family. In terms of assembly, homodimer. FAD is required as a cofactor.

The protein localises to the cytoplasm. It carries out the reaction N(6)-[(R)-dihydrolipoyl]-L-lysyl-[protein] + NAD(+) = N(6)-[(R)-lipoyl]-L-lysyl-[protein] + NADH + H(+). This is Dihydrolipoyl dehydrogenase 3 (lpdA3) from Haloarcula marismortui (strain ATCC 43049 / DSM 3752 / JCM 8966 / VKM B-1809) (Halobacterium marismortui).